Reading from the N-terminus, the 154-residue chain is Xanthine-guanine phosphoribosyltransferase (154 aa).

Residues 37–38 (RG), Arg69, and 88–96 (DDLVDSGDT) each bind 5-phospho-alpha-D-ribose 1-diphosphate. Residue Arg69 coordinates GMP. A Mg(2+)-binding site is contributed by Asp89. 2 residues coordinate guanine: Asp92 and Ile135. Positions 92 and 135 each coordinate xanthine. GMP is bound by residues 92–96 (DSGDT) and 134–135 (WI).

It belongs to the purine/pyrimidine phosphoribosyltransferase family. XGPT subfamily. Homotetramer. The cofactor is Mg(2+).

The protein resides in the cell inner membrane. The catalysed reaction is GMP + diphosphate = guanine + 5-phospho-alpha-D-ribose 1-diphosphate. It carries out the reaction XMP + diphosphate = xanthine + 5-phospho-alpha-D-ribose 1-diphosphate. The enzyme catalyses IMP + diphosphate = hypoxanthine + 5-phospho-alpha-D-ribose 1-diphosphate. Its pathway is purine metabolism; GMP biosynthesis via salvage pathway; GMP from guanine: step 1/1. It participates in purine metabolism; XMP biosynthesis via salvage pathway; XMP from xanthine: step 1/1. Functionally, purine salvage pathway enzyme that catalyzes the transfer of the ribosyl-5-phosphate group from 5-phospho-alpha-D-ribose 1-diphosphate (PRPP) to the N9 position of the 6-oxopurines guanine and xanthine to form the corresponding ribonucleotides GMP (guanosine 5'-monophosphate) and XMP (xanthosine 5'-monophosphate), with the release of PPi. To a lesser extent, also acts on hypoxanthine. The protein is Xanthine-guanine phosphoribosyltransferase of Vibrio cholerae serotype O1 (strain ATCC 39541 / Classical Ogawa 395 / O395).